Here is a 173-residue protein sequence, read N- to C-terminus: Ribosome maturation factor RimM (173 aa).

Residues 95–169 (EGSYYFKDIL…RIEVTLLEGL (75 aa)) form the PRC barrel domain.

The protein belongs to the RimM family. As to quaternary structure, binds ribosomal protein uS19.

It is found in the cytoplasm. Functionally, an accessory protein needed during the final step in the assembly of 30S ribosomal subunit, possibly for assembly of the head region. Essential for efficient processing of 16S rRNA. May be needed both before and after RbfA during the maturation of 16S rRNA. It has affinity for free ribosomal 30S subunits but not for 70S ribosomes. This chain is Ribosome maturation factor RimM, found in Lactobacillus johnsonii (strain CNCM I-12250 / La1 / NCC 533).